A 308-amino-acid chain; its full sequence is 34.2 kDa protein in rubredoxin operon (308 aa).

Cysteine 136 and cysteine 139 form a disulfide bridge. Residue 268–278 (TNIKGVFAAGD) participates in FAD binding.

Belongs to the class-II pyridine nucleotide-disulfide oxidoreductase family.

In Clostridium pasteurianum, this protein is 34.2 kDa protein in rubredoxin operon.